The primary structure comprises 518 residues: Glutamate--cysteine ligase (518 aa).

It belongs to the glutamate--cysteine ligase type 1 family. Type 1 subfamily.

The enzyme catalyses L-cysteine + L-glutamate + ATP = gamma-L-glutamyl-L-cysteine + ADP + phosphate + H(+). The protein operates within sulfur metabolism; glutathione biosynthesis; glutathione from L-cysteine and L-glutamate: step 1/2. The protein is Glutamate--cysteine ligase of Klebsiella pneumoniae subsp. pneumoniae (strain ATCC 700721 / MGH 78578).